A 126-amino-acid chain; its full sequence is Small ribosomal subunit protein eS8 (126 aa).

Residues 1-10 are compositionally biased toward polar residues; the sequence is MAIWQGSSLR. A disordered region spans residues 1–35; the sequence is MAIWQGSSLRKPSGARSRRNKNKRNAEFGRNPAET.

This sequence belongs to the eukaryotic ribosomal protein eS8 family. In terms of assembly, part of the 30S ribosomal subunit.

The polypeptide is Small ribosomal subunit protein eS8 (Methanosphaera stadtmanae (strain ATCC 43021 / DSM 3091 / JCM 11832 / MCB-3)).